The following is a 174-amino-acid chain: 2-C-methyl-D-erythritol 2,4-cyclodiphosphate synthase (174 aa).

Positions 13, 15, and 61 each coordinate a divalent metal cation. 13-15 is a binding site for 4-CDP-2-C-methyl-D-erythritol 2-phosphate; the sequence is DAH. Residues 75–77, 149–152, F156, and R159 contribute to the 4-CDP-2-C-methyl-D-erythritol 2-phosphate site; these read DIG and TTTD.

It belongs to the IspF family. As to quaternary structure, homotrimer. A divalent metal cation is required as a cofactor.

It carries out the reaction 4-CDP-2-C-methyl-D-erythritol 2-phosphate = 2-C-methyl-D-erythritol 2,4-cyclic diphosphate + CMP. It functions in the pathway isoprenoid biosynthesis; isopentenyl diphosphate biosynthesis via DXP pathway; isopentenyl diphosphate from 1-deoxy-D-xylulose 5-phosphate: step 4/6. In terms of biological role, involved in the biosynthesis of isopentenyl diphosphate (IPP) and dimethylallyl diphosphate (DMAPP), two major building blocks of isoprenoid compounds. Catalyzes the conversion of 4-diphosphocytidyl-2-C-methyl-D-erythritol 2-phosphate (CDP-ME2P) to 2-C-methyl-D-erythritol 2,4-cyclodiphosphate (ME-CPP) with a corresponding release of cytidine 5-monophosphate (CMP). In Bifidobacterium longum subsp. infantis (strain ATCC 15697 / DSM 20088 / JCM 1222 / NCTC 11817 / S12), this protein is 2-C-methyl-D-erythritol 2,4-cyclodiphosphate synthase.